We begin with the raw amino-acid sequence, 677 residues long: uncharacterized protein (677 aa).

The next 3 helical transmembrane spans lie at 80 to 102 (ILSL…RASF), 338 to 360 (ALLS…LFGF), and 367 to 386 (LVAM…LLSL). The interval 523-556 (DEAASLPSDSSPEEDLDPLEEVESIEGTAEESTR) is disordered. The span at 533 to 546 (SPEEDLDPLEEVES) shows a compositional bias: acidic residues.

Its subcellular location is the cell membrane. This is an uncharacterized protein from Treponema pallidum (strain Nichols).